The primary structure comprises 184 residues: Probable RNA 2'-phosphotransferase (184 aa).

The protein belongs to the KptA/TPT1 family.

Removes the 2'-phosphate from RNA via an intermediate in which the phosphate is ADP-ribosylated by NAD followed by a presumed transesterification to release the RNA and generate ADP-ribose 1''-2''-cyclic phosphate (APPR&gt;P). May function as an ADP-ribosylase. In Escherichia coli O9:H4 (strain HS), this protein is Probable RNA 2'-phosphotransferase.